The chain runs to 91 residues: Non-specific lipid-transfer protein 1 (91 aa).

4 cysteine pairs are disulfide-bonded: cysteine 4/cysteine 51, cysteine 14/cysteine 28, cysteine 29/cysteine 74, and cysteine 49/cysteine 88.

It belongs to the plant LTP family. As to expression, detected in seeds (at protein level).

Its function is as follows. Plant non-specific lipid-transfer proteins transfer phospholipids as well as galactolipids across membranes. May play a role in wax or cutin deposition in the cell walls of expanding epidermal cells and certain secretory tissues. The protein is Non-specific lipid-transfer protein 1 of Carum carvi (Caraway).